The sequence spans 189 residues: Crossover junction endodeoxyribonuclease RuvC (189 aa).

Catalysis depends on residues D11, E71, and D143. The Mg(2+) site is built by D11, E71, and D143.

Belongs to the RuvC family. In terms of assembly, homodimer which binds Holliday junction (HJ) DNA. The HJ becomes 2-fold symmetrical on binding to RuvC with unstacked arms; it has a different conformation from HJ DNA in complex with RuvA. In the full resolvosome a probable DNA-RuvA(4)-RuvB(12)-RuvC(2) complex forms which resolves the HJ. Mg(2+) is required as a cofactor.

It localises to the cytoplasm. It catalyses the reaction Endonucleolytic cleavage at a junction such as a reciprocal single-stranded crossover between two homologous DNA duplexes (Holliday junction).. The RuvA-RuvB-RuvC complex processes Holliday junction (HJ) DNA during genetic recombination and DNA repair. Endonuclease that resolves HJ intermediates. Cleaves cruciform DNA by making single-stranded nicks across the HJ at symmetrical positions within the homologous arms, yielding a 5'-phosphate and a 3'-hydroxyl group; requires a central core of homology in the junction. The consensus cleavage sequence is 5'-(A/T)TT(C/G)-3'. Cleavage occurs on the 3'-side of the TT dinucleotide at the point of strand exchange. HJ branch migration catalyzed by RuvA-RuvB allows RuvC to scan DNA until it finds its consensus sequence, where it cleaves and resolves the cruciform DNA. In Methylorubrum populi (strain ATCC BAA-705 / NCIMB 13946 / BJ001) (Methylobacterium populi), this protein is Crossover junction endodeoxyribonuclease RuvC.